A 292-amino-acid polypeptide reads, in one-letter code: Trimeric intracellular cation channel type B (292 aa).

Topologically, residues 1 to 16 (MEYPWDDLTLAFSRTS) are lumenal. The chain crosses the membrane as a helical span at residues 17–34 (MFPFFDIAHYLVSVMALK). At 35–47 (QRPGAVAAAWNNP) the chain is on the cytoplasmic side. Residues 48–69 (LASWLSAMLHCFGGGILSCMLL) traverse the membrane as a helical segment. At 70 to 82 (AESPLKFLTNHTN) the chain is on the lumenal side. A helical membrane pass occupies residues 83 to 100 (ILLASSIWYIVFFCPRDL). Topologically, residues 101–103 (VSQ) are cytoplasmic. The chain crosses the membrane as a helical span at residues 104–122 (GYSYQPIQFLAAGMKEVTR). 2 residues coordinate a 1,2-diacyl-sn-glycero-3-phospho-(1D-myo-inositol-4,5-bisphosphate): Lys118 and Arg122. Over 123-140 (TWKIVGGVSDANSYYRNA) the chain is Lumenal. The chain crosses the membrane as a helical span at residues 141–158 (WIVMIVVGWARGAGGAVV). Topologically, residues 159–178 (TACEQLLKGDWKPEGDEWLK) are cytoplasmic. Residues 179–195 (MSFPCKITLLGSIMFTF) traverse the membrane as a helical segment. The Lumenal segment spans residues 196–206 (QHTRHLAISKH). The helical transmembrane segment at 207–225 (DLMFLYTIFLVTIKVTMMM) threads the bilayer. At 226-292 (TKDTAVTLTP…GAKRHAKKED (67 aa)) the chain is on the cytoplasmic side. The segment at 248-292 (RQQQQFSSSEKKTEVKPSSNGSASSASKRGAEPSGGAKRHAKKED) is disordered. A compositionally biased stretch (low complexity) spans 265–274 (SSNGSASSAS).

It belongs to the TMEM38 family. In terms of assembly, homotrimer; conformation seems to be controled by binding to diacylglycerol (DAG). In terms of tissue distribution, widely expressed.

It localises to the endoplasmic reticulum membrane. The catalysed reaction is K(+)(in) = K(+)(out). With respect to regulation, channel activity is activated by increased cytosolic Ca(2+) levels and blocked by luminal high Ca(2+) levels. In terms of biological role, intracellular monovalent cation channel required for maintenance of rapid intracellular calcium release. Acts as a potassium counter-ion channel that functions in synchronization with calcium release from intracellular stores. Activated by increased cytosolic Ca(2+) levels. This Mus musculus (Mouse) protein is Trimeric intracellular cation channel type B (Tmem38b).